Reading from the N-terminus, the 590-residue chain is Leucine-rich repeat transmembrane neuronal protein 4 (590 aa).

A signal peptide spans 1-30 (MGFHLITQLKGMSVVLVLLPTLLLVMLTGA). Positions 31–61 (QRACPKNCRCDGKIVYCESHAFADIPENISG) constitute an LRRNT domain. Over 31-424 (QRACPKNCRC…QEYEHVSFHK (394 aa)) the chain is Extracellular. A glycan (N-linked (GlcNAc...) asparagine) is linked at Asn-58. LRR repeat units lie at residues 62-83 (GSQG…QFAG), 86-107 (QLIW…AFQG), 110-131 (RLKE…TFHP), 134-155 (NLRN…QFKG), 158-179 (KLII…VFQD), 182-203 (NLDF…AFAG), 206-226 (KLKE…AHFP), 230-251 (NLRS…LTWT), 254-275 (SLHN…TFKC), and 278-299 (NLQK…TVNA). The N-linked (GlcNAc...) asparagine glycan is linked to Asn-126. The N-linked (GlcNAc...) asparagine glycan is linked to Asn-291. Residues 311 to 362 (NMWECSRSICPLFYWLKNFKGNKESTMICAGPKHIQGEKVSDAVETYNICSE) form the LRRCT domain. The chain crosses the membrane as a helical span at residues 425–445 (IIAGSVALFLSVAMILLVIYV). Residues 446 to 590 (SWKRYPASMK…PAIYLERIAN (145 aa)) are Cytoplasmic-facing.

This sequence belongs to the LRRTM family. Peripherally associated with AMPAR complex. AMPAR complex consists of an inner core made of 4 pore-forming GluA/GRIA proteins (GRIA1, GRIA2, GRIA3 and GRIA4) and 4 major auxiliary subunits arranged in a twofold symmetry. One of the two pairs of distinct binding sites is occupied either by CNIH2, CNIH3 or CACNG2, CACNG3. The other harbors CACNG2, CACNG3, CACNG4, CACNG8 or GSG1L. This inner core of AMPAR complex is complemented by outer core constituents binding directly to the GluA/GRIA proteins at sites distinct from the interaction sites of the inner core constituents. Outer core constituents include at least PRRT1, PRRT2, CKAMP44/SHISA9, FRRS1L and NRN1. The proteins of the inner and outer core serve as a platform for other, more peripherally associated AMPAR constituents, including LRRTM4. Alone or in combination, these auxiliary subunits control the gating and pharmacology of the AMPAR complex and profoundly impact their biogenesis and protein processing. In terms of tissue distribution, expressed in neuronal tissues.

Its subcellular location is the cell membrane. It localises to the postsynaptic cell membrane. May play a role in the development and maintenance of the vertebrate nervous system. Exhibits strong synaptogenic activity, restricted to excitatory presynaptic differentiation. The polypeptide is Leucine-rich repeat transmembrane neuronal protein 4 (LRRTM4) (Homo sapiens (Human)).